A 406-amino-acid polypeptide reads, in one-letter code: uncharacterized protein (406 aa).

The segment covering 136–153 (SQKNWGSEKNWNSPSQGP) has biased composition (polar residues). The segment at 136–157 (SQKNWGSEKNWNSPSQGPASRE) is disordered.

This is an uncharacterized protein from Rattus norvegicus (Rat).